A 187-amino-acid polypeptide reads, in one-letter code: CASP-like protein 2 (187 aa).

The Cytoplasmic segment spans residues 1 to 24; that stretch reads MKVSAVETGEISQVSAPRKGMIRG. Residues 25–45 form a helical membrane-spanning segment; sequence LSIMDFILRIVAAIGTLGSAL. Topologically, residues 46-72 are extracellular; it reads STGTTRETLPFTTQFVKFRAVFDDLPT. A helical membrane pass occupies residues 73–93; the sequence is FVFFVTSNSIVCGYLVLSLAL. Residues 94 to 108 are Cytoplasmic-facing; the sequence is SFFHIIRRSSAAKSR. The chain crosses the membrane as a helical span at residues 109–129; that stretch reads ILLVFLDTVMFGLLTTGAAAA. Over 130 to 163 the chain is Extracellular; it reads GTIVYVSHYGNVNANWFPFCGQYNHFCERISGSL. The helical transmembrane segment at 164-184 threads the bilayer; it reads IGSFIAVVIFMIIILMSAVSI. Over 185–187 the chain is Cytoplasmic; sequence SKH.

It belongs to the Casparian strip membrane proteins (CASP) family. Homodimer and heterodimers.

It is found in the cell membrane. The polypeptide is CASP-like protein 2 (Lotus japonicus (Lotus corniculatus var. japonicus)).